The following is a 2365-amino-acid chain: TRIO and F-actin-binding protein (2365 aa).

4 disordered regions span residues 48-1106 (VPYC…HEPL), 1168-1554 (HRDA…SERR), 1593-1667 (LPRK…WPKI), and 1679-1751 (AGLE…TSWR). Residues 132 to 151 (SDPTSSPDSATPDDTSNSSS) show a composition bias toward low complexity. Histidine 221 carries the phosphothreonine modification. Polar residues-rich tracts occupy residues 239 to 271 (TLTQ…QAAS), 291 to 375 (RASS…TPQR), 403 to 422 (RTSC…SPNR), 429 to 471 (RTSC…SPNR), 478 to 520 (RTSC…SPNR), 527 to 569 (RTSC…SPNR), 576 to 618 (RTSC…SPNR), 625 to 650 (RTSC…SPRT), 661 to 674 (SSPN…NPRT), 683 to 701 (RASS…TSCA), 709 to 722 (SSPN…NPRT), 745 to 785 (RTSC…SPNR), and 807 to 837 (IRAT…PKTS). Residues 324 to 348 (STQEDTPRASSTQWNTPRASSPSRS) are essentiel for its aggregation. Glutamine 457 is subject to Phosphothreonine. The span at 839-854 (TKRDNLRPTCTQRDRT) shows a compositional bias: basic and acidic residues. Polar residues-rich tracts occupy residues 855–898 (QSFS…SSPH), 913–927 (PTQS…PSRS), and 945–994 (DRPQ…TSSP). Over residues 1045-1056 (RAPESEPPHHEP) the composition is skewed to basic and acidic residues. The span at 1195–1206 (SMESLAPSTDSL) shows a compositional bias: polar residues. 2 stretches are compositionally biased toward basic and acidic residues: residues 1260-1270 (ETRHNLEREEY) and 1303-1319 (GRAE…RKSE). Residues 1332-1349 (SQQPSQGQSQLLRRQSSP) show a composition bias toward low complexity. Basic and acidic residues-rich tracts occupy residues 1378–1387 (SPEKRPEGDR) and 1402–1411 (TPERELRTQR). A compositionally biased stretch (gly residues) spans 1452–1461 (GGLGPGGWWG). Residues 1494 to 1508 (WEEKPTHELPRELGK) are compositionally biased toward basic and acidic residues. The span at 1524 to 1534 (ESSQSWHSGTP) shows a compositional bias: polar residues. Over residues 1594 to 1606 (PRKDPAGHRDDLA) the composition is skewed to basic and acidic residues. Over residues 1645–1664 (ALQSQSPVQLPSPACTSTQW) the composition is skewed to polar residues. Positions 1696–1705 (PSLPELQFQP) are enriched in low complexity. Over residues 1724–1735 (KQADSADKRPAE) the composition is skewed to basic and acidic residues. The PH domain maps to 1778-1887 (LNFKKGWMSI…WIEALRKTVR (110 aa)). Phosphoserine is present on serine 1796. Disordered regions lie at residues 1889-2017 (TSAP…LTED) and 2174-2194 (LSKT…HQSD). Omega-N-methylarginine is present on arginine 1930. Serine 1949 and serine 1955 each carry phosphoserine. Over residues 1965-1997 (TPDRLAKQEELERDLAQRSEERRKWFEATDSRT) the composition is skewed to basic and acidic residues. Coiled-coil stretches lie at residues 2062 to 2247 (SDGH…NQEL) and 2281 to 2361 (ELEV…SMRN).

Isoform 1 forms aggregates. Isoform 1 binds to TRIO and F-actin. Isoform 1 may also interact with myosin II. Interacts with HECTD3. Interacts with PJVK. Interacts with TERF1; mediates TERF1 localization to the centrosome. Ubiquitinated by HECTD3, leading to its degradation by the proteasome. Post-translationally, phosphorylation at Thr-457 by PLK1 ensures mitotic progression and is essential for accurate chromosome segregation. Phosphorylation at residues Thr-221 and Thr-457 by kinase NEK2A and PLK1 coordinates TERF1 translocation from telomere to spindle pole. As to expression, widely expressed. Highly expressed in heart and placenta. Expressed in fetal brain, retina and cochlea but is not detectable in the other tissues.

It localises to the nucleus. Its subcellular location is the cytoplasm. The protein localises to the cytoskeleton. The protein resides in the microtubule organizing center. It is found in the centrosome. It localises to the midbody. Its subcellular location is the chromosome. The protein localises to the telomere. Functionally, regulates actin cytoskeletal organization, cell spreading and cell contraction by directly binding and stabilizing filamentous F-actin and prevents its depolymerization. May also serve as a linker protein to recruit proteins required for F-actin formation and turnover. Essential for correct mitotic progression. Plays a pivotal role in the formation of stereocilia rootlets. This is TRIO and F-actin-binding protein (TRIOBP) from Homo sapiens (Human).